A 378-amino-acid polypeptide reads, in one-letter code: Ecotin-like protein 3 (378 aa).

2 disordered regions span residues 191–216 (HRLS…HAAP) and 238–378 (PQNN…KADP). Residues 274 to 287 (NEPSPSRPRLSSTE) are compositionally biased toward polar residues. The span at 337–348 (RKAEDNVYEKTM) shows a compositional bias: basic and acidic residues. The segment covering 362-378 (KASASSKKSGNGSKADP) has biased composition (low complexity).

Belongs to the protease inhibitor I11 (ecotin) family.

This chain is Ecotin-like protein 3, found in Leishmania infantum.